Reading from the N-terminus, the 685-residue chain is Putative alpha-1,3-mannosyltransferase MNN14 (685 aa).

Topologically, residues 1 to 13 (MGLLSIPYQSKSK) are cytoplasmic. A helical transmembrane segment spans residues 14–34 (LWIAIFLVVWSLISMHFIWQS). Residues 35–685 (QANSGLILKN…EIWMRGYNYL (651 aa)) are Lumenal-facing. 4 N-linked (GlcNAc...) asparagine glycosylation sites follow: N199, N338, N408, and N556.

This sequence belongs to the MNN1/MNT family.

The protein resides in the golgi apparatus membrane. It participates in protein modification; protein glycosylation. Responsible for addition of the terminal mannose residues to the outer chain of core N-linked polysaccharides and to O-linked mannotriose. Implicated in late Golgi modifications. Involved in virulence. The sequence is that of Putative alpha-1,3-mannosyltransferase MNN14 (MNN14) from Candida albicans (strain SC5314 / ATCC MYA-2876) (Yeast).